A 187-amino-acid polypeptide reads, in one-letter code: Large ribosomal subunit protein uL22B (187 aa).

It belongs to the universal ribosomal protein uL22 family. Component of the large ribosomal subunit (LSU). Mature yeast ribosomes consist of a small (40S) and a large (60S) subunit. The 40S small subunit contains 1 molecule of ribosomal RNA (18S rRNA) and at least 33 different proteins. The large 60S subunit contains 3 rRNA molecules (25S, 5.8S and 5S rRNA) and at least 46 different proteins. uL22 is associated with the polypeptide exit tunnel.

The protein resides in the cytoplasm. In terms of biological role, component of the ribosome, a large ribonucleoprotein complex responsible for the synthesis of proteins in the cell. The small ribosomal subunit (SSU) binds messenger RNAs (mRNAs) and translates the encoded message by selecting cognate aminoacyl-transfer RNA (tRNA) molecules. The large subunit (LSU) contains the ribosomal catalytic site termed the peptidyl transferase center (PTC), which catalyzes the formation of peptide bonds, thereby polymerizing the amino acids delivered by tRNAs into a polypeptide chain. The nascent polypeptides leave the ribosome through a tunnel in the LSU and interact with protein factors that function in enzymatic processing, targeting, and the membrane insertion of nascent chains at the exit of the ribosomal tunnel. This Schizosaccharomyces pombe (strain 972 / ATCC 24843) (Fission yeast) protein is Large ribosomal subunit protein uL22B (rpl1702).